A 273-amino-acid polypeptide reads, in one-letter code: Elongation factor Ts (273 aa).

The interval 79–82 is involved in Mg(2+) ion dislocation from EF-Tu; it reads TDFV.

This sequence belongs to the EF-Ts family.

The protein resides in the cytoplasm. Associates with the EF-Tu.GDP complex and induces the exchange of GDP to GTP. It remains bound to the aminoacyl-tRNA.EF-Tu.GTP complex up to the GTP hydrolysis stage on the ribosome. This chain is Elongation factor Ts, found in Hydrogenobaculum sp. (strain Y04AAS1).